Here is a 196-residue protein sequence, read N- to C-terminus: Oocyte zinc finger protein XlCOF26 (196 aa).

7 C2H2-type zinc fingers span residues 6–28 (YSCT…QKNH), 34–56 (FTCT…QRIH), 62–84 (FTCT…QRIH), 90–112 (FTCT…HKIH), 118–140 (FTCP…QRTH), 146–168 (FTCT…QSTH), and 174–196 (FTCT…QMTH).

Belongs to the krueppel C2H2-type zinc-finger protein family.

Its subcellular location is the nucleus. Functionally, may be involved in transcriptional regulation. The chain is Oocyte zinc finger protein XlCOF26 from Xenopus laevis (African clawed frog).